The sequence spans 164 residues: Arginine repressor (164 aa).

Belongs to the ArgR family.

The protein localises to the cytoplasm. It participates in amino-acid biosynthesis; L-arginine biosynthesis [regulation]. In terms of biological role, regulates arginine biosynthesis genes. This chain is Arginine repressor, found in Mycobacterium avium (strain 104).